The primary structure comprises 448 residues: Selenide, water dikinase 2 (448 aa).

A2 carries the post-translational modification N-acetylalanine. Phosphoserine is present on S46. The active site involves U60. A non-standard amino acid (selenocysteine) is located at residue U60. An ATP-binding site is contributed by K63. The disordered stretch occupies residues L85–G107. Residue S97 is modified to Phosphoserine. ATP contacts are provided by residues G118–D120, D138, D161, and G212–T215. D120 serves as a coordination point for Mg(2+). A Mg(2+)-binding site is contributed by D161. D316 contacts Mg(2+).

It belongs to the selenophosphate synthase 1 family. Class I subfamily. As to quaternary structure, homodimer. Mg(2+) serves as cofactor. Truncated SEPHS2 proteins produced by failed UGA/Sec decoding are ubiquitinated by the CRL2(KLHDC3) complex, which recognizes the glycine (Gly) at the C-terminus of truncated SEPHS2 proteins.

It catalyses the reaction hydrogenselenide + ATP + H2O = selenophosphate + AMP + phosphate + 2 H(+). Its function is as follows. Synthesizes selenophosphate from selenide and ATP. The polypeptide is Selenide, water dikinase 2 (SEPHS2) (Homo sapiens (Human)).